A 333-amino-acid polypeptide reads, in one-letter code: MTRFVSSAINLLLVLVLGVSLSGCVTTRLPVASTSPWQALNLDTEANPLDVAFTDSRHGYLVGSNRMIRETNDGGATWNDRSLDLPEEENFRLISIDFNGDEGWIAGQPGLLMHTSDGGQNWTRLFLDTKLPGEPYLITALGSHSAEMATNVGAVYETHDDGGSWEALVTDAAGAVRDLRRGDDGSYVSVSSLGNFYATWQPGDSVWQVHQRVSSQRLQSIGYQPDGNLWMVARGAQIRLNDESGNLESWTKAIIPITNGYGYMDMAWDEDGAIWAGGGNGTLLVSRDGADSWEIDPVGDRQPSNFTRMVFDWDHAFVLGERGNLLRWVGNAV.

The N-terminal stretch at 1–23 (MTRFVSSAINLLLVLVLGVSLSG) is a signal peptide. Cysteine 24 carries the N-palmitoyl cysteine lipid modification. A lipid anchor (S-diacylglycerol cysteine) is attached at cysteine 24.

It belongs to the Ycf48 family. Part of early PSII assembly complexes which includes D1 (psbA) and PsbI; not found in mature PSII. Binds to the lumenal side of PSII complexes. Interacts with YidC.

It is found in the cellular thylakoid membrane. A factor required for optimal assembly of photosystem II (PSII), acting in the early stages of PSII assembly. Also plays a role in replacement of photodamaged D1 (psbA). Assists YidC in synthesis of chlorophyll-binding proteins. The sequence is that of Photosystem II assembly lipoprotein Ycf48 from Parasynechococcus marenigrum (strain WH8102).